The sequence spans 169 residues: SsrA-binding protein (169 aa).

It belongs to the SmpB family.

It is found in the cytoplasm. Required for rescue of stalled ribosomes mediated by trans-translation. Binds to transfer-messenger RNA (tmRNA), required for stable association of tmRNA with ribosomes. tmRNA and SmpB together mimic tRNA shape, replacing the anticodon stem-loop with SmpB. tmRNA is encoded by the ssrA gene; the 2 termini fold to resemble tRNA(Ala) and it encodes a 'tag peptide', a short internal open reading frame. During trans-translation Ala-aminoacylated tmRNA acts like a tRNA, entering the A-site of stalled ribosomes, displacing the stalled mRNA. The ribosome then switches to translate the ORF on the tmRNA; the nascent peptide is terminated with the 'tag peptide' encoded by the tmRNA and targeted for degradation. The ribosome is freed to recommence translation, which seems to be the essential function of trans-translation. The polypeptide is SsrA-binding protein (Mycolicibacterium paratuberculosis (strain ATCC BAA-968 / K-10) (Mycobacterium paratuberculosis)).